Reading from the N-terminus, the 155-residue chain is Ribosomal RNA large subunit methyltransferase H (155 aa).

Residues Leu-73, Gly-104, and 123 to 128 (ISKMTF) each bind S-adenosyl-L-methionine.

Belongs to the RNA methyltransferase RlmH family. Homodimer.

Its subcellular location is the cytoplasm. It catalyses the reaction pseudouridine(1915) in 23S rRNA + S-adenosyl-L-methionine = N(3)-methylpseudouridine(1915) in 23S rRNA + S-adenosyl-L-homocysteine + H(+). Its function is as follows. Specifically methylates the pseudouridine at position 1915 (m3Psi1915) in 23S rRNA. This is Ribosomal RNA large subunit methyltransferase H from Francisella philomiragia subsp. philomiragia (strain ATCC 25017 / CCUG 19701 / FSC 153 / O#319-036).